Consider the following 370-residue polypeptide: Protein-tyrosine sulfotransferase 1 (370 aa).

At 1–8 (MVGKLKQN) the chain is on the cytoplasmic side. The helical; Signal-anchor for type II membrane protein transmembrane segment at 9–25 (LLLACLVISSVTVFYLG) threads the bilayer. Over 26-370 (QHAMECHHRI…KEKPQTEQVE (345 aa)) the chain is Lumenal. N-linked (GlcNAc...) asparagine glycosylation occurs at N60. 3'-phosphoadenylyl sulfate is bound at residue 79–83 (RSGTT). C97 and C157 are disulfide-bonded. Catalysis depends on E100, which acts as the Proton donor/acceptor. The segment at 102–106 (RVIPR) is interaction with peptide substrate. 3'-phosphoadenylyl sulfate-binding residues include R184, S192, and R196. A disulfide bridge links C226 with C234. Position 239 (Y239) interacts with 3'-phosphoadenylyl sulfate. N-linked (GlcNAc...) asparagine glycosylation occurs at N262. Residues 286-295 (STDQVIKPVN) and K301 contribute to the 3'-phosphoadenylyl sulfate site.

The protein belongs to the protein sulfotransferase family. As to quaternary structure, homodimer. Can also form heterodimers with TPST2. In terms of processing, N-glycosylated. In terms of tissue distribution, ubiquitous. Detected in heart, brain, placenta, lung, liver, skeletal muscle, kidney and pancreas.

It localises to the golgi apparatus membrane. The enzyme catalyses L-tyrosyl-[protein] + 3'-phosphoadenylyl sulfate = O-sulfo-L-tyrosine-[protein] + adenosine 3',5'-bisphosphate + H(+). Its function is as follows. Catalyzes the O-sulfation of tyrosine residues within acidic motifs of polypeptides, using 3'-phosphoadenylyl sulfate (PAPS) as cosubstrate. The polypeptide is Protein-tyrosine sulfotransferase 1 (TPST1) (Homo sapiens (Human)).